A 671-amino-acid chain; its full sequence is DNA ligase (671 aa).

NAD(+) is bound by residues 32 to 36 (DAEYD), 81 to 82 (SL), and Glu-113. The active-site N6-AMP-lysine intermediate is the Lys-115. Arg-136, Glu-173, Lys-290, and Lys-314 together coordinate NAD(+). Zn(2+) contacts are provided by Cys-408, Cys-411, Cys-426, and Cys-432. A BRCT domain is found at 593–671 (EIDSPFAGKT…EAEMLRLLGS (79 aa)).

The protein belongs to the NAD-dependent DNA ligase family. LigA subfamily. The cofactor is Mg(2+). Mn(2+) serves as cofactor.

It catalyses the reaction NAD(+) + (deoxyribonucleotide)n-3'-hydroxyl + 5'-phospho-(deoxyribonucleotide)m = (deoxyribonucleotide)n+m + AMP + beta-nicotinamide D-nucleotide.. Its function is as follows. DNA ligase that catalyzes the formation of phosphodiester linkages between 5'-phosphoryl and 3'-hydroxyl groups in double-stranded DNA using NAD as a coenzyme and as the energy source for the reaction. It is essential for DNA replication and repair of damaged DNA. In Escherichia coli O7:K1 (strain IAI39 / ExPEC), this protein is DNA ligase.